Here is a 143-residue protein sequence, read N- to C-terminus: uncharacterized protein (143 aa).

The interval 1–143 (MRSSRQKASI…WFSQTVKRKA (143 aa)) is disordered. Composition is skewed to basic and acidic residues over residues 34 to 46 (ISAEKEEEEKHLD) and 61 to 76 (EYQKETKEKETDRKIV). Acidic residues-rich tracts occupy residues 77–93 (DDEEETKFETTLEPEEE) and 103–115 (YEEEDEDEEPDLA).

This is an uncharacterized protein from Bacillus subtilis (strain 168).